The primary structure comprises 158 residues: Regulator of sigma D (158 aa).

This sequence belongs to the Rsd/AlgQ family. Interacts with RpoD.

The protein localises to the cytoplasm. Functionally, binds RpoD and negatively regulates RpoD-mediated transcription activation by preventing the interaction between the primary sigma factor RpoD with the catalytic core of the RNA polymerase and with promoter DNA. May be involved in replacement of the RNA polymerase sigma subunit from RpoD to RpoS during the transition from exponential growth to the stationary phase. The chain is Regulator of sigma D from Escherichia coli O6:H1 (strain CFT073 / ATCC 700928 / UPEC).